The sequence spans 172 residues: DNA-directed RNA polymerase II subunit rpb7 (172 aa).

The protein belongs to the eukaryotic RPB7/RPC8 RNA polymerase subunit family. Component of the RNA polymerase II (Pol II) complex consisting of 12 subunits. RPB4 and RPB7 form a subcomplex that protrudes from the 10-subunit Pol II core complex.

It is found in the nucleus. Functionally, DNA-dependent RNA polymerase catalyzes the transcription of DNA into RNA using the four ribonucleoside triphosphates as substrates. Component of RNA polymerase II which synthesizes mRNA precursors and many functional non-coding RNAs. Pol II is the central component of the basal RNA polymerase II transcription machinery. It is composed of mobile elements that move relative to each other. RPB7 is part of a subcomplex with RPB4 that binds to a pocket formed by RPB1, RPB2 and RPB6 at the base of the clamp element. The RPB4-RPB7 subcomplex seems to lock the clamp via RPB7 in the closed conformation thus preventing double-stranded DNA to enter the active site cleft. The RPB4-RPB7 subcomplex binds single-stranded DNA and RNA. In Dictyostelium discoideum (Social amoeba), this protein is DNA-directed RNA polymerase II subunit rpb7 (polr2g).